We begin with the raw amino-acid sequence, 637 residues long: Phospholipase B (637 aa).

The signal sequence occupies residues Met-1–Ala-19. The PLA2c domain occupies Asp-46–Asn-572. N-linked (GlcNAc...) asparagine glycosylation is found at Asn-50, Asn-56, Asn-122, Asn-231, Asn-246, Asn-272, Asn-314, Asn-343, Asn-387, Asn-433, Asn-481, Asn-501, Asn-528, Asn-553, Asn-572, Asn-594, and Asn-606.

This sequence belongs to the lysophospholipase family. Post-translationally, N-glycosylated.

Its subcellular location is the secreted. The enzyme catalyses a 1-acyl-sn-glycero-3-phosphocholine + H2O = sn-glycerol 3-phosphocholine + a fatty acid + H(+). In terms of biological role, exhibits phospholipase B (PLB), lysophospholipase (LPL) and lysophospholipase/transacylase (LPTA) activities. This Cryptococcus neoformans var. neoformans serotype D (strain B-3501A) (Filobasidiella neoformans) protein is Phospholipase B (PLB1).